The following is a 157-amino-acid chain: Peptide methionine sulfoxide reductase MsrA (157 aa).

Cys-13 is a catalytic residue.

The protein belongs to the MsrA Met sulfoxide reductase family.

The catalysed reaction is L-methionyl-[protein] + [thioredoxin]-disulfide + H2O = L-methionyl-(S)-S-oxide-[protein] + [thioredoxin]-dithiol. The enzyme catalyses [thioredoxin]-disulfide + L-methionine + H2O = L-methionine (S)-S-oxide + [thioredoxin]-dithiol. In terms of biological role, has an important function as a repair enzyme for proteins that have been inactivated by oxidation. Catalyzes the reversible oxidation-reduction of methionine sulfoxide in proteins to methionine. The protein is Peptide methionine sulfoxide reductase MsrA of Methanococcus maripaludis (strain C6 / ATCC BAA-1332).